Here is a 358-residue protein sequence, read N- to C-terminus: Acyl-CoA desaturase 1 (358 aa).

Over 1 to 71 (MPAHMLQEIS…EGPPPKLEYV (71 aa)) the chain is Cytoplasmic. Residues 8-24 (EISSSYTTTTTITEPPS) show a composition bias toward low complexity. Residues 8–33 (EISSSYTTTTTITEPPSGNLQNGREK) form a disordered region. A helical membrane pass occupies residues 72–92 (WRNIILMALLHVGALYGITLI). Asparagine 74 is a substrate binding site. Residues 93–96 (PSSK) are Lumenal-facing. A helical membrane pass occupies residues 97–117 (VYTLLWGIFYYLISALGITAG). Topologically, residues 118-216 (AHRLWSHRTY…EKLVMFQRRY (99 aa)) are cytoplasmic. Histidine 119 and histidine 124 together coordinate Fe cation. Positions 119 to 124 (HRLWSH) match the Histidine box-1 motif. Substrate contacts are provided by asparagine 147, arginine 154, and aspartate 155. Fe cation is bound by residues histidine 156, histidine 159, and histidine 160. The short motif at 156-160 (HRAHH) is the Histidine box-2 element. Arginine 187 and lysine 188 together coordinate substrate. A helical transmembrane segment spans residues 217–236 (YKPGLLLMCFILPTLVPWYC). Residues 237–240 (WGET) lie on the Lumenal side of the membrane. Residues 241–262 (FLHSLFVSTFLRYTLVLNATWL) traverse the membrane as a helical segment. Residue tryptophan 261 coordinates substrate. Over 263-358 (VNSAAHLYGY…RTGDGSHKSS (96 aa)) the chain is Cytoplasmic. Fe cation-binding residues include histidine 268, histidine 297, histidine 300, and histidine 301. The Histidine box-3 signature appears at 297–301 (HNYHH).

Belongs to the fatty acid desaturase type 1 family. Requires Fe(2+) as cofactor. In terms of tissue distribution, detected in liver (at protein level). Detected in adipose tissue. Detected in liver when rats are kept on a fat-free diet, but not when their food contains unsaturated fatty acids.

It is found in the endoplasmic reticulum membrane. The protein localises to the membrane. The catalysed reaction is octadecanoyl-CoA + 2 Fe(II)-[cytochrome b5] + O2 + 2 H(+) = (9Z)-octadecenoyl-CoA + 2 Fe(III)-[cytochrome b5] + 2 H2O. Stearoyl-CoA desaturase that utilizes O(2) and electrons from reduced cytochrome b5 to introduce the first double bond into saturated fatty acyl-CoA substrates. Catalyzes the insertion of a cis double bond at the Delta-9 position into fatty acyl-CoA substrates including palmitoyl-CoA and stearoyl-CoA. Gives rise to a mixture of 16:1 and 18:1 unsaturated fatty acids. Plays an important role in lipid biosynthesis. Plays an important role in regulating the expression of genes that are involved in lipogenesis and in regulating mitochondrial fatty acid oxidation. Plays an important role in body energy homeostasis. Contributes to the biosynthesis of membrane phospholipids, cholesterol esters and triglycerides. Required for normal development of sebaceous glands. Required for the biosynthesis of normal levels of Delta-9 unsaturated fatty acids and 1-alkyl-2,3-diacylglycerol in the Harderian gland. Required for normal production of meibum, an oily material that prevents drying of the cornea. The polypeptide is Acyl-CoA desaturase 1 (Scd1) (Rattus norvegicus (Rat)).